A 626-amino-acid chain; its full sequence is Trehalase (626 aa).

The first 35 residues, 1-35, serve as a signal peptide directing secretion; it reads MASSCSIRCGSRNILVNAAATFLALLVVLRCFANA. Topologically, residues 36–595 are extracellular; it reads EKPSPCQSDV…STPQPVVVST (560 aa). N104 carries an N-linked (GlcNAc...) asparagine glycan. Residues R181, 188-189, N225, and 234-236 contribute to the substrate site; these read WD and RSQ. The N-linked (GlcNAc...) asparagine glycan is linked to N274. Substrate-binding positions include 299 to 301 and G333; that span reads RPE. Residue D335 is the Proton donor/acceptor of the active site. N-linked (GlcNAc...) asparagine glycans are attached at residues N350, N384, N498, and N525. Catalysis depends on E532, which acts as the Proton donor/acceptor. E547 contributes to the substrate binding site. A helical transmembrane segment spans residues 596-616; that stretch reads AGQVMTGILALVISLAAGFIG. The Cytoplasmic portion of the chain corresponds to 617 to 626; sequence KMRCANNAAQ.

Belongs to the glycosyl hydrolase 37 family. As to quaternary structure, monomer. In terms of processing, glycosylated; contains 3.1% carbohydrates.

Its subcellular location is the membrane. It carries out the reaction alpha,alpha-trehalose + H2O = alpha-D-glucose + beta-D-glucose. With respect to regulation, inhibited by sodium, potassium and ammonium ions, and by TEMED. This is Trehalase from Apis mellifera (Honeybee).